A 615-amino-acid polypeptide reads, in one-letter code: 1-deoxy-D-xylulose-5-phosphate synthase (615 aa).

Thiamine diphosphate-binding positions include His-72 and 111–113; that span reads GHS. Asp-142 contributes to the Mg(2+) binding site. Residues 143–144, Asn-171, Tyr-278, and Glu-360 each bind thiamine diphosphate; that span reads GA. Residue Asn-171 participates in Mg(2+) binding.

The protein belongs to the transketolase family. DXPS subfamily. In terms of assembly, homodimer. Requires Mg(2+) as cofactor. Thiamine diphosphate is required as a cofactor.

It catalyses the reaction D-glyceraldehyde 3-phosphate + pyruvate + H(+) = 1-deoxy-D-xylulose 5-phosphate + CO2. Its pathway is metabolic intermediate biosynthesis; 1-deoxy-D-xylulose 5-phosphate biosynthesis; 1-deoxy-D-xylulose 5-phosphate from D-glyceraldehyde 3-phosphate and pyruvate: step 1/1. Catalyzes the acyloin condensation reaction between C atoms 2 and 3 of pyruvate and glyceraldehyde 3-phosphate to yield 1-deoxy-D-xylulose-5-phosphate (DXP). In Campylobacter jejuni subsp. jejuni serotype O:6 (strain 81116 / NCTC 11828), this protein is 1-deoxy-D-xylulose-5-phosphate synthase.